The sequence spans 127 residues: Cytochrome c' (127 aa).

At Gln1 the chain carries Pyrrolidone carboxylic acid. Heme c is bound by residues Arg12, Gln13, Asp67, Cys116, Cys119, and His120.

As to quaternary structure, homodimer. Binds 1 heme c group covalently per subunit.

The protein resides in the periplasm. Cytochrome c' is the most widely occurring bacterial c-type cytochrome. Cytochromes c' are high-spin proteins and the heme has no sixth ligand. Their exact function is not known. This chain is Cytochrome c', found in Alcaligenes xylosoxydans xylosoxydans (Achromobacter xylosoxidans).